A 215-amino-acid polypeptide reads, in one-letter code: Pyrrolidone-carboxylate peptidase (215 aa).

Active-site residues include E80, C143, and H167.

Belongs to the peptidase C15 family. Homotetramer.

Its subcellular location is the cytoplasm. It carries out the reaction Release of an N-terminal pyroglutamyl group from a polypeptide, the second amino acid generally not being Pro.. Removes 5-oxoproline from various penultimate amino acid residues except L-proline. The protein is Pyrrolidone-carboxylate peptidase of Yersinia pseudotuberculosis serotype O:3 (strain YPIII).